Reading from the N-terminus, the 812-residue chain is Leucine-rich repeat-containing protein 41 (812 aa).

Residues 45–54 (ALFELCGRAV) form an interaction with Elongin BC complex region. Phosphoserine occurs at positions 155, 276, and 326. A disordered region spans residues 267-408 (GEASRGRAPS…GARTRQGPGA (142 aa)). The residue at position 327 (threonine 327) is a Phosphothreonine. Positions 354–381 (TKRSPSAPAATSSASSSTSSYKRAPASS) are enriched in low complexity. Phosphoserine occurs at positions 357 and 373. Positions 387–401 (PLKRFKRAAGKKGAR) are enriched in basic residues. LRR repeat units follow at residues 487–507 (WVSL…IFRL), 518–530 (AGCR…LSDL), 531–555 (FSPL…VLSI), 613–635 (SGSL…FGLV), 636–659 (LQTL…LADC), 701–728 (NSTL…VFSE), and 731–752 (SSSL…LLEF).

Part of an E3 ubiquitin-protein ligase complex with Elongin BC (ELOB and ELOC), RBX1 and CUL5. Component of a probable ECS(LRRC41) complex which contains CUL5, RNF7/RBX2, Elongin BC and LRRC41. Interacts with CUL5, RNF7, ELOB and ELOC.

It functions in the pathway protein modification; protein ubiquitination. In terms of biological role, probable substrate recognition component of an ECS (Elongin BC-CUL2/5-SOCS-box protein) E3 ubiquitin ligase complex which mediates the ubiquitination and subsequent proteasomal degradation of target proteins. This chain is Leucine-rich repeat-containing protein 41 (LRRC41), found in Homo sapiens (Human).